The sequence spans 1074 residues: Phospholipase D1 (1074 aa).

Positions isoleucine 81–serine 212 constitute a PX domain. A PH domain is found at proline 219 to arginine 328. S-palmitoyl cysteine attachment occurs at residues cysteine 240 and cysteine 241. A PLD phosphodiesterase 1 domain is found at tyrosine 459–arginine 486. Residues histidine 463–alanine 928 form a catalytic region. Residues serine 499, serine 561, and serine 629 each carry the phosphoserine modification. A PLD phosphodiesterase 2 domain is found at glutamate 891–serine 918.

It belongs to the phospholipase D family. Interacts with PIP5K1B. As to expression, expressed in kidney, lung, and at a much lower levels, in brain, liver, heart, testis and spleen.

It is found in the cytoplasm. It localises to the perinuclear region. The protein localises to the endoplasmic reticulum membrane. Its subcellular location is the golgi apparatus membrane. The protein resides in the late endosome membrane. It catalyses the reaction a 1,2-diacyl-sn-glycero-3-phosphocholine + H2O = a 1,2-diacyl-sn-glycero-3-phosphate + choline + H(+). The enzyme catalyses ethanol + a 1,2-diacyl-sn-glycero-3-phosphocholine = 1,2-diacyl-sn-glycero-3-phosphoethanol + choline. The catalysed reaction is 1,2-dihexadecanoyl-sn-glycero-3-phosphocholine + H2O = 1,2-dihexadecanoyl-sn-glycero-3-phosphate + choline + H(+). Stimulated by phosphatidylinositol 4,5-bisphosphate and phosphatidylinositol 3,4,5-trisphosphate, activated by the phosphokinase C-alpha, by the ADP-ribosylation factor-1 (ARF-1), and to a lesser extent by GTP-binding proteins: RHO A, RAC-1 and CDC42. Inhibited by oleate. Its function is as follows. Function as phospholipase selectivefor phosphatidylcholine. Implicated as a critical step in numerous cellular pathways, including signal transduction, membrane trafficking, and the regulation of mitosis. May be involved in the regulation of perinuclear intravesicular membrane traffic. The chain is Phospholipase D1 from Mus musculus (Mouse).